Reading from the N-terminus, the 249-residue chain is 2,3-bisphosphoglycerate-dependent phosphoglycerate mutase (249 aa).

Residues 8-15, 21-22, Arg60, 87-90, Lys98, 114-115, and 183-184 each bind substrate; these read RHGESVWN, TG, ERHY, RR, and GN. His9 acts as the Tele-phosphohistidine intermediate in catalysis. Residue Glu87 is the Proton donor/acceptor of the active site.

This sequence belongs to the phosphoglycerate mutase family. BPG-dependent PGAM subfamily.

The catalysed reaction is (2R)-2-phosphoglycerate = (2R)-3-phosphoglycerate. It participates in carbohydrate degradation; glycolysis; pyruvate from D-glyceraldehyde 3-phosphate: step 3/5. Functionally, catalyzes the interconversion of 2-phosphoglycerate and 3-phosphoglycerate. The sequence is that of 2,3-bisphosphoglycerate-dependent phosphoglycerate mutase from Chloroherpeton thalassium (strain ATCC 35110 / GB-78).